Consider the following 170-residue polypeptide: MAQIRIHEINTRIENEKEVQLFLQKEDVLYEKWDISKLPAHLQNNYALTDENKEEILTLFSNEIADVSQRRGYKAHDIISLSSATPNLDELLINFKQEHHHTDDEVRFIVSGHGIFAIQGKDGRFFDVELEPGDLISVPENVRHYFTLQDDRQVVAIRIFVTTAGWVPIY.

Fe(2+)-binding residues include His99, His101, Glu105, and His144. His99, His101, Glu105, and His144 together coordinate Ni(2+).

Belongs to the acireductone dioxygenase (ARD) family. As to quaternary structure, monomer. Requires Fe(2+) as cofactor. The cofactor is Ni(2+).

The catalysed reaction is 1,2-dihydroxy-5-(methylsulfanyl)pent-1-en-3-one + O2 = 3-(methylsulfanyl)propanoate + CO + formate + 2 H(+). It catalyses the reaction 1,2-dihydroxy-5-(methylsulfanyl)pent-1-en-3-one + O2 = 4-methylsulfanyl-2-oxobutanoate + formate + 2 H(+). Its pathway is amino-acid biosynthesis; L-methionine biosynthesis via salvage pathway; L-methionine from S-methyl-5-thio-alpha-D-ribose 1-phosphate: step 5/6. Catalyzes 2 different reactions between oxygen and the acireductone 1,2-dihydroxy-3-keto-5-methylthiopentene (DHK-MTPene) depending upon the metal bound in the active site. Fe-containing acireductone dioxygenase (Fe-ARD) produces formate and 2-keto-4-methylthiobutyrate (KMTB), the alpha-ketoacid precursor of methionine in the methionine recycle pathway. Ni-containing acireductone dioxygenase (Ni-ARD) produces methylthiopropionate, carbon monoxide and formate, and does not lie on the methionine recycle pathway. In Bacillus cytotoxicus (strain DSM 22905 / CIP 110041 / 391-98 / NVH 391-98), this protein is Acireductone dioxygenase.